We begin with the raw amino-acid sequence, 380 residues long: Anhydro-N-acetylmuramic acid kinase (380 aa).

17–24 (GTSMDGAD) provides a ligand contact to ATP.

This sequence belongs to the anhydro-N-acetylmuramic acid kinase family.

The enzyme catalyses 1,6-anhydro-N-acetyl-beta-muramate + ATP + H2O = N-acetyl-D-muramate 6-phosphate + ADP + H(+). It participates in amino-sugar metabolism; 1,6-anhydro-N-acetylmuramate degradation. The protein operates within cell wall biogenesis; peptidoglycan recycling. Functionally, catalyzes the specific phosphorylation of 1,6-anhydro-N-acetylmuramic acid (anhMurNAc) with the simultaneous cleavage of the 1,6-anhydro ring, generating MurNAc-6-P. Is required for the utilization of anhMurNAc either imported from the medium or derived from its own cell wall murein, and thus plays a role in cell wall recycling. The protein is Anhydro-N-acetylmuramic acid kinase of Cupriavidus metallidurans (strain ATCC 43123 / DSM 2839 / NBRC 102507 / CH34) (Ralstonia metallidurans).